Reading from the N-terminus, the 709-residue chain is Solute carrier organic anion transporter family member 2B1 (709 aa).

Positions 1–38 (MGPRIGPAGEVPQVPDKETKATMGTENTPGGKASPDPQ) are disordered. The Cytoplasmic portion of the chain corresponds to 1 to 49 (MGPRIGPAGEVPQVPDKETKATMGTENTPGGKASPDPQDVRPSVFHNIK). Ser34 carries the post-translational modification Phosphoserine. The helical transmembrane segment at 50 to 69 (LFVLCHSLLQLAQLMISGYL) threads the bilayer. A required for E1S and taurocholate transport; required for transporter stability region spans residues 51–69 (FVLCHSLLQLAQLMISGYL). At 70–88 (KSSISTVEKRFGLSSQTSG) the chain is on the extracellular side. Residues 89–109 (LLASFNEVGNTALIVFVSYFG) form a helical membrane-spanning segment. Topologically, residues 110–115 (SRVHRP) are cytoplasmic. The helical transmembrane segment at 116-140 (RMIGYGAILVALAGLLMTLPHFISE) threads the bilayer. Topologically, residues 141–185 (PYRYDNTSPEDMPQDFKASLCLPTTSAPASAPSNGNCSSYTETQH) are extracellular. N-linked (GlcNAc...) asparagine glycosylation occurs at Asn176. A helical transmembrane segment spans residues 186 to 215 (LSVVGIMFVAQTLLGVGGVPIQPFGISYID). At 216–234 (DFAHNSNSPLYLGILFAVT) the chain is on the cytoplasmic side. A helical membrane pass occupies residues 235–255 (MMGPGLAFGLGSLMLRLYVDI). The Extracellular portion of the chain corresponds to 256–273 (NQMPEGGISLTIKDPRWV). Residues 274–298 (GAWWLGFLIAAGAVALAAIPYFFFP) traverse the membrane as a helical segment. At 299–366 (KEMPKEKREL…IKVFPRVLLQ (68 aa)) the chain is on the cytoplasmic side. At Thr318 the chain carries Phosphothreonine. Residues 319-342 (DSPARKGKDSPSKQSPGESTKKQD) are disordered. A Phosphoserine modification is found at Ser320. The helical transmembrane segment at 367–388 (TLRHPIFLLVVLSQVCLSSMAA) threads the bilayer. Residues 389-408 (GMATFLPKFLERQFSITASY) lie on the Extracellular side of the membrane. Residues 409 to 432 (ANLLIGCLSFPSVIVGIVVGGVLV) form a helical membrane-spanning segment. The Cytoplasmic portion of the chain corresponds to 433–436 (KRLH). Residues 437-460 (LGPVGCGALCLLGMLLCLFFSLPL) traverse the membrane as a helical segment. The Extracellular segment spans residues 461–564 (FFIGCSSHQI…STCSHLVVPF (104 aa)). Residues 483–543 (LELSPSCMEA…VFYTNCSCVV (61 aa)) form the Kazal-like domain. 3 disulfides stabilise this stretch: Cys489-Cys520, Cys495-Cys516, and Cys504-Cys541. Asn538 carries an N-linked (GlcNAc...) asparagine glycan. The chain crosses the membrane as a helical span at residues 565 to 587 (LLLVSLGSALACLTHTPSFMLIL). At 588–596 (RGVKKEDKT) the chain is on the cytoplasmic side. A helical membrane pass occupies residues 597–622 (LAVGIQFMFLRILAWMPSPVIHGSAI). Topologically, residues 623–655 (DTTCVHWALSCGRRAVCRYYNNDLLRNRFIGLQ) are extracellular. Residues 656–673 (FFFKTGSVICFALVLAVL) traverse the membrane as a helical segment. Over 674–709 (RQQDKEARTKESRSSPAVEQQLLVSGPGKKPEDSRV) the chain is Cytoplasmic. Residues 679–709 (EARTKESRSSPAVEQQLLVSGPGKKPEDSRV) are disordered.

Belongs to the organo anion transporter (TC 2.A.60) family. In terms of tissue distribution, strongly expressed in the liver, at the sinusoidal membrane of the hepatocytes. Expressed in the kidney. Expressed in placental trophoblasts and syncytiotrophoblast. Expressed in the small intestine. Expressed in the blood-brain barrier, in endothelial cells of brain capillaries. Expressed in the retina, in the inner nuclear layer and the inner plexiform layer. Expressed in skelettal muscles. In testis, primarily localized to the basal membrane of Sertoli cells and weakly expressed within the tubules. Also expressed in pancreas, lung, heart, colon, ovary and spleen. Expressed in fetal brain, heart, kidney, liver, lung, skeletal muscle, spleen and pancreas. As to expression, highest expression in brain. Predominant isoform compared to isoform 3 in small intestine duodenum, kidney, placenta, and skeletal muscle. Predominant isoform compared to isoform 1 in liver. Also expressed in small intestine duodenum, kidney, brain, placenta, and skeletal muscle.

It localises to the cell membrane. The protein localises to the basal cell membrane. The protein resides in the basolateral cell membrane. It is found in the apical cell membrane. The catalysed reaction is dehydroepiandrosterone 3-sulfate(out) = dehydroepiandrosterone 3-sulfate(in). The enzyme catalyses estrone 3-sulfate(out) = estrone 3-sulfate(in). It catalyses the reaction estrone 3-sulfate(out) + hydrogencarbonate(in) = estrone 3-sulfate(in) + hydrogencarbonate(out). It carries out the reaction taurocholate(out) = taurocholate(in). The catalysed reaction is coproporphyrin III(out) = coproporphyrin III(in). The enzyme catalyses substance P(out) = substance P(in). It catalyses the reaction pregnenolone sulfate(out) = pregnenolone sulfate(in). It carries out the reaction prostaglandin E2(out) = prostaglandin E2(in). The catalysed reaction is prostaglandin D2(out) = prostaglandin D2(in). The enzyme catalyses L-thyroxine(out) = L-thyroxine(in). Its activity is regulated as follows. E1S, DHEA-S and PregS transports are regulated by steroid hormones. In the case of testosterone, transport of E1S and DHEA-S was inhibited, whereas progesterone stimulated E1S, DHEA-S and PregS uptake. Progesterone stimulates high-affinity uptake of E1S whereas it inhibits low-affinity uptake of E1S. Progesterone doesn't affect the uptake of PGE2. Its function is as follows. Mediates the Na(+)-independent transport of steroid sulfate conjugates and other specific organic anions. Responsible for the transport of estrone 3-sulfate (E1S) through the basal membrane of syncytiotrophoblast, highlighting a potential role in the placental absorption of fetal-derived sulfated steroids including the steroid hormone precursor dehydroepiandrosterone sulfate (DHEA-S). Also facilitates the uptake of sulfated steroids at the basal/sinusoidal membrane of hepatocytes, therefore accounting for the major part of organic anions clearance of liver. Mediates the intestinal uptake of sulfated steroids. Mediates the uptake of the neurosteroids DHEA-S and pregnenolone sulfate (PregS) into the endothelial cells of the blood-brain barrier as the first step to enter the brain. Also plays a role in the reuptake of neuropeptides such as substance P/TAC1 and vasoactive intestinal peptide/VIP released from retinal neurons. May act as a heme transporter that promotes cellular iron availability via heme oxygenase/HMOX2 and independently of TFRC. Also transports heme by-product coproporphyrin III (CPIII), and may be involved in their hepatic disposition. Mediates the uptake of other substrates such as prostaglandins D2 (PGD2), E1 (PGE1) and E2 (PGE2), taurocholate, L-thyroxine, leukotriene C4 and thromboxane B2. May contribute to regulate the transport of organic compounds in testis across the blood-testis-barrier. Shows a pH-sensitive substrate specificity which may be ascribed to the protonation state of the binding site and leads to a stimulation of substrate transport in an acidic microenvironment. The exact transport mechanism has not been yet deciphered but most likely involves an anion exchange, coupling the cellular uptake of organic substrate with the efflux of an anionic compound. Hydrogencarbonate/HCO3(-) acts as a probable counteranion that exchanges for organic anions. Cytoplasmic glutamate may also act as counteranion in the placenta. An inwardly directed proton gradient has also been proposed as the driving force of E1S uptake with a (H(+):E1S) stoichiometry of (1:1). Functionally, has estrone 3-sulfate (E1S) transport activity comparable with the full-length isoform 1. The chain is Solute carrier organic anion transporter family member 2B1 from Homo sapiens (Human).